Here is a 364-residue protein sequence, read N- to C-terminus: Aminomethyltransferase (364 aa).

Belongs to the GcvT family. As to quaternary structure, the glycine cleavage system is composed of four proteins: P, T, L and H.

It catalyses the reaction N(6)-[(R)-S(8)-aminomethyldihydrolipoyl]-L-lysyl-[protein] + (6S)-5,6,7,8-tetrahydrofolate = N(6)-[(R)-dihydrolipoyl]-L-lysyl-[protein] + (6R)-5,10-methylene-5,6,7,8-tetrahydrofolate + NH4(+). The glycine cleavage system catalyzes the degradation of glycine. The polypeptide is Aminomethyltransferase (Shewanella baltica (strain OS195)).